The following is a 317-amino-acid chain: Membrane-associated protein VIPP1, chloroplastic (317 aa).

Positions 92 to 246 (EMNDDLTKMR…SQAEALGQLA (155 aa)) form a coiled coil. Positions 265 to 317 (DLAQMKKEISGSSSKGELPPGRTAVSNSGAARPFRDIEIENELNELRKKANEY) are disordered. The span at 297-317 (PFRDIEIENELNELRKKANEY) shows a compositional bias: basic and acidic residues.

It belongs to the PspA/Vipp/IM30 family. As to quaternary structure, homomultimer. Complex formation involves interaction via the central alpha-helical domain (71-286). (Microbial infection) Interacts with the rice tungro bacilliform virus (RTBV) capsid protein.

The protein resides in the plastid. The protein localises to the chloroplast inner membrane. Its subcellular location is the chloroplast thylakoid membrane. Its function is as follows. Required for plastid vesicle formation and thylakoid membrane biogenesis, but not for functional assembly of thylakoid protein complexes. The protein is Membrane-associated protein VIPP1, chloroplastic of Oryza sativa subsp. japonica (Rice).